The chain runs to 358 residues: 3-dehydroquinate synthase (358 aa).

NAD(+)-binding positions include 70-75 (DGEQFK), 104-108 (GVIGD), 128-129 (TT), Lys-141, Lys-150, and 168-171 (CLHT). Zn(2+) contacts are provided by Glu-183, His-246, and His-263.

It belongs to the sugar phosphate cyclases superfamily. Dehydroquinate synthase family. The cofactor is Co(2+). Zn(2+) is required as a cofactor. Requires NAD(+) as cofactor.

The protein localises to the cytoplasm. It catalyses the reaction 7-phospho-2-dehydro-3-deoxy-D-arabino-heptonate = 3-dehydroquinate + phosphate. It participates in metabolic intermediate biosynthesis; chorismate biosynthesis; chorismate from D-erythrose 4-phosphate and phosphoenolpyruvate: step 2/7. Functionally, catalyzes the conversion of 3-deoxy-D-arabino-heptulosonate 7-phosphate (DAHP) to dehydroquinate (DHQ). The sequence is that of 3-dehydroquinate synthase from Shewanella baltica (strain OS185).